The following is a 271-amino-acid chain: ATP synthase subunit a (271 aa).

The next 5 membrane-spanning stretches (helical) occupy residues 40 to 60 (TINIDSMFFSVVLGLLFLVLF), 100 to 120 (LIAPLALTIFVWVFLMNLMDL), 146 to 166 (DVNVTLSMALGVFILILFYSI), 220 to 240 (LIFILIAGLLPWWSQWILNVP), and 242 to 262 (AIFHILIITLQAFIFMVLTIV).

The protein belongs to the ATPase A chain family. As to quaternary structure, F-type ATPases have 2 components, CF(1) - the catalytic core - and CF(0) - the membrane proton channel. CF(1) has five subunits: alpha(3), beta(3), gamma(1), delta(1), epsilon(1). CF(0) has three main subunits: a(1), b(2) and c(9-12). The alpha and beta chains form an alternating ring which encloses part of the gamma chain. CF(1) is attached to CF(0) by a central stalk formed by the gamma and epsilon chains, while a peripheral stalk is formed by the delta and b chains.

The protein resides in the cell inner membrane. Its function is as follows. Key component of the proton channel; it plays a direct role in the translocation of protons across the membrane. This chain is ATP synthase subunit a, found in Escherichia coli O8 (strain IAI1).